A 313-amino-acid chain; its full sequence is Probable cell division protein WhiA (313 aa).

Residues 274 to 308 (SLKELGELVPGGPISKSGVNHRLRKLNAYADELRA) constitute a DNA-binding region (H-T-H motif).

It belongs to the WhiA family.

Its function is as follows. Involved in cell division and chromosome segregation. This is Probable cell division protein WhiA from Limosilactobacillus reuteri subsp. reuteri (strain JCM 1112) (Lactobacillus reuteri).